A 338-amino-acid chain; its full sequence is MIEVRSVTKRFGKGSRSVEVLHDIDFSVGTGQIAAVIGQSGAGKTTLSRIISLLERPSEGRILLDGTDVSGLSERRLRDQRRAIGTIFQASSLLARRTAAENVALPLEFAGVGRSERRARVAELLGRVGLSDKADLYPRQLSGGQRQRVGIARSLALAPKVLVSDEATSGLDPNTTRSILALLRELRDDLGLTIVLITHEMDVVRQVADVVTVLDAGRVVESGPVIELLRDPHSELGVGLLPDRSHITAEDRDVLWHVTYGSDTVPTNWIELLGKATGRSIGVLSGTVESVGGRPAGRVTISVAGEHPSVGDLLSSWGLHGTRVDDDASARTTEEAAA.

The region spanning 2-241 (IEVRSVTKRF…PHSELGVGLL (240 aa)) is the ABC transporter domain. Position 38–45 (38–45 (GQSGAGKT)) interacts with ATP.

This sequence belongs to the ABC transporter superfamily. Methionine importer (TC 3.A.1.24) family. As to quaternary structure, the complex is composed of two ATP-binding proteins (MetN), two transmembrane proteins (MetI) and a solute-binding protein (MetQ).

It localises to the cell membrane. The catalysed reaction is L-methionine(out) + ATP + H2O = L-methionine(in) + ADP + phosphate + H(+). It carries out the reaction D-methionine(out) + ATP + H2O = D-methionine(in) + ADP + phosphate + H(+). Functionally, part of the ABC transporter complex MetNIQ involved in methionine import. Responsible for energy coupling to the transport system. The sequence is that of Methionine import ATP-binding protein MetN 1 from Rhodococcus jostii (strain RHA1).